We begin with the raw amino-acid sequence, 588 residues long: Sperm-associated microtubule inner protein 4 (588 aa).

A Phosphothreonine modification is found at T219. Residues S406, S421, and S427 each carry the phosphoserine modification. Residue Y441 is modified to Phosphotyrosine. S457, S484, and S516 each carry phosphoserine.

As to expression, predominantly expressed in the testes.

The protein resides in the cytoplasm. The protein localises to the cytoskeleton. It is found in the microtubule organizing center. It localises to the centrosome. Its subcellular location is the flagellum axoneme. Microtubule inner protein (MIP) part of the dynein-decorated doublet microtubules (DMTs) in flagellum axoneme. May serve to reinforce and thus stabilize the microtubule structure in the sperm flagella. The polypeptide is Sperm-associated microtubule inner protein 4 (Spmip4) (Mus musculus (Mouse)).